A 169-amino-acid polypeptide reads, in one-letter code: Nucleoside diphosphate kinase 3 (169 aa).

ADP contacts are provided by K29, R105, T111, R122, V129, and N132. The active-site Pros-phosphohistidine intermediate is the H135.

This sequence belongs to the NDK family. In terms of assembly, homohexamer. Interacts (via its N-terminal region) with KAT5; this interaction enables recruitment of NME3 at DNA damage sites where it plays a role in the repair of DNA. Found in association with several ciliary nephronophthisis proteins, including NEK8, CEP164, ANKS6. The cofactor is Mg(2+).

The protein localises to the mitochondrion outer membrane. It localises to the cytoplasm. Its subcellular location is the cytoskeleton. The protein resides in the cilium basal body. It carries out the reaction a 2'-deoxyribonucleoside 5'-diphosphate + ATP = a 2'-deoxyribonucleoside 5'-triphosphate + ADP. It catalyses the reaction a ribonucleoside 5'-diphosphate + ATP = a ribonucleoside 5'-triphosphate + ADP. In terms of biological role, catalyzes the phosphorylation of ribonucleosides and deoxyribonucleoside diphosphates, other than ATP, into the corresponding triphosphates with ATP as the major phosphate donor. The ATP gamma phosphate is transferred to the nucleoside diphosphate beta phosphate via a ping-pong mechanism, using a phosphorylated active-site intermediate. Through the catalyzed exchange of gamma-phosphate between di- and triphosphonucleosides participates in regulation of intracellular nucleotide homeostasis. Inhibits granulocyte differentiation. May be required for ciliary function during renal development. Its function is as follows. Independently of its kinase activity, facilitates mitochondrial tethering prior to membrane fusion through its direct membrane-binding and hexamerization. Implicated in repair of both single- and double-stranded breaks in DNA through its association with the ribonucleotide reductase complex (RNR complex) via its interaction with the histone acetyltransferase KAT5, this interaction enables recruitment of NME3 at DNA damage sites where it plays a role in the repair of DNA, independently of its kinase activity. The protein is Nucleoside diphosphate kinase 3 of Homo sapiens (Human).